Here is a 232-residue protein sequence, read N- to C-terminus: LexA repressor (232 aa).

The H-T-H motif DNA-binding region spans Phe-26–Thr-46. Active-site for autocatalytic cleavage activity residues include Ser-153 and Lys-191.

It belongs to the peptidase S24 family. In terms of assembly, homodimer.

The enzyme catalyses Hydrolysis of Ala-|-Gly bond in repressor LexA.. Represses a number of genes involved in the response to DNA damage (SOS response), including recA and lexA. In the presence of single-stranded DNA, RecA interacts with LexA causing an autocatalytic cleavage which disrupts the DNA-binding part of LexA, leading to derepression of the SOS regulon and eventually DNA repair. In Bradyrhizobium sp. (strain ORS 278), this protein is LexA repressor.